A 595-amino-acid chain; its full sequence is Pentatricopeptide repeat-containing protein At4g21065 (595 aa).

9 PPR repeats span residues 84–118 (NVFI…GLVE), 120–154 (DTHT…GFGS), 155–185 (LIYV…MPEK), 186–220 (DLVA…GIKP), 221–255 (DGFT…GLTR), 256–290 (NLHS…NSVS), 291–317 (WTSL…MEST), 323–353 (CEIT…MREE), and 359–389 (RIEH…MPMQ). A type E motif region spans residues 394-469 (IWRTLLGACT…VPGHSLVEVG (76 aa)). A type E(+) motif region spans residues 470–500 (NRVHEFLMGDKSHPQSDAIYAKLKEMTGRLR). Residues 501 to 595 (SEGYVPQISN…NGSCSCQDYW (95 aa)) form a type DYW motif region.

The protein belongs to the PPR family. PCMP-H subfamily.

This chain is Pentatricopeptide repeat-containing protein At4g21065 (PCMP-H28), found in Arabidopsis thaliana (Mouse-ear cress).